We begin with the raw amino-acid sequence, 395 residues long: Allantoicase (395 aa).

This sequence belongs to the allantoicase family.

It catalyses the reaction allantoate + H2O = (S)-ureidoglycolate + urea. It functions in the pathway nitrogen metabolism; (S)-allantoin degradation; (S)-ureidoglycolate from allantoate (aminidohydrolase route): step 1/1. Its function is as follows. Utilization of purines as secondary nitrogen sources, when primary sources are limiting. This is Allantoicase (allc) from Danio rerio (Zebrafish).